Consider the following 197-residue polypeptide: Imidazoleglycerol-phosphate dehydratase (197 aa).

It belongs to the imidazoleglycerol-phosphate dehydratase family.

The protein localises to the cytoplasm. It carries out the reaction D-erythro-1-(imidazol-4-yl)glycerol 3-phosphate = 3-(imidazol-4-yl)-2-oxopropyl phosphate + H2O. The protein operates within amino-acid biosynthesis; L-histidine biosynthesis; L-histidine from 5-phospho-alpha-D-ribose 1-diphosphate: step 6/9. The sequence is that of Imidazoleglycerol-phosphate dehydratase (hisB) from Streptomyces coelicolor (strain ATCC BAA-471 / A3(2) / M145).